Here is a 105-residue protein sequence, read N- to C-terminus: Endoribonuclease MazF1 (105 aa).

This sequence belongs to the PemK/MazF family. Forms a complex with cognate antitoxin MazE1.

Toxic component of a type II toxin-antitoxin (TA) system. Acts as an endoribonuclease on single-strand RNA, cleaving between the first and second bases in the sequence UCGCU. Neutralized by coexpression with cognate antitoxin MazE1. In Mycobacterium bovis (strain ATCC BAA-935 / AF2122/97), this protein is Endoribonuclease MazF1 (mazF1).